The chain runs to 853 residues: Lysine-specific histone demethylase 1A (853 aa).

The disordered stretch occupies residues 1 to 177; sequence MLSGKKAAAA…EPEEPSGVEG (177 aa). The span at 7-26 shows a compositional bias: low complexity; it reads AAAAAAAAAAAAAAGTEAGS. Thr-60 carries the phosphothreonine modification. The segment covering 76-97 has biased composition (low complexity); sequence AEPPGSAGPQAGPTAGPGSATP. Thr-105 is modified (phosphothreonine). Residues 111 to 152 are a coiled coil; sequence TSRRKRAKVEYREMDESLANLSEDEYYSEEERNAKAEKEKKL. A phosphoserine mark is found at Ser-127 and Ser-132. Tyr-136 carries the phosphotyrosine modification. Ser-138 is subject to Phosphoserine. Over residues 139 to 152 the composition is skewed to basic and acidic residues; the sequence is EEERNAKAEKEKKL. Positions 161-173 are enriched in acidic residues; it reads PEEENESEPEEPS. Ser-167 carries the post-translational modification Phosphoserine. Residues 175 to 274 enclose the SWIRM domain; the sequence is VEGAAFQSRL…FGIYKRIKPL (100 aa). Residues Ser-290, Glu-309, Arg-311, Arg-317, and 333–334 each bind FAD; that span reads MV. The tract at residues 301-853 is demethylase activity; it reads FGMDVTLLEA…GVPAQQSPSM (553 aa). Residues 429-515 are a coiled coil; that stretch reads IEHWKKIVKT…EEKLQELEAN (87 aa). Lys-433, Lys-434, and Lys-437 each carry N6-acetyllysine. Glycyl lysine isopeptide (Lys-Gly) (interchain with G-Cter in SUMO2) cross-links involve residues Lys-443 and Lys-470. Lys-504 participates in a covalent cross-link: Glycyl lysine isopeptide (Lys-Gly) (interchain with G-Cter in ubiquitin). Phosphoserine is present on Ser-612. FAD contacts are provided by residues Glu-802 and 811-812; that span reads TV. Ser-850 bears the Phosphoserine mark.

This sequence belongs to the flavin monoamine oxidase family. As to quaternary structure, component of a histone demethylase complex with RCOR1. Component of a BHC histone deacetylase complex that contains HDAC1, HDAC2, HMG20B, KDM1A, RCOR1 and PHF21A. The BHC complex may also contain ZMYM2, ZNF217, ZMYM3, GSE1 and GTF2I. In the complex, RCOR1 strongly enhances the demethylase activity and protects it from the proteasome while PHF21A inhibits the demethylase activity. Interacts with the androgen receptor (AR). Component of a RCOR/GFI/KDM1A/HDAC complex. Interacts directly with GFI1 and GFI1B. Interacts with SNAI1 (via SNAG domain). Interacts with INSM1. Interacts (via AOD/Tower domain) with JADE2 (via C-terminus). Interacts with ESRRB; co-occupes the core set of ESRRB targets. Interacts with SAMD1 (via WH domain); the interaction modulates KDM1A function. Interacts with RBPJ. Interacts with L3MBTL3. Interacts with ZMYND8. FAD serves as cofactor. Acetylated by KAT8 in epithelial but not in mesenchymal cells, thereby regulating the epithelial-to-mesenchymal transition. Acetylation by KAT8 reduces KDM1A association with nucleosomes, thereby decreasing histone H3 demethylation, leading to transcription activatio of target genes. In terms of processing, polyubiquitinated by JADE2; which leads to its proteasomal degradation. Deubiquitinated by USP38; preventing it from degradation by the 26S proteasome. In terms of tissue distribution, ubiquitously expressed.

It localises to the nucleus. It is found in the chromosome. The enzyme catalyses N(6),N(6)-dimethyl-L-lysyl(4)-[histone H3] + 2 A + 2 H2O = L-lysyl(4)-[histone H3] + 2 formaldehyde + 2 AH2. Its activity is regulated as follows. The N-terminal sequences of INSM1 and SNAI1 compete with histone H3 for the same binding site and thereby inhibit histone demethylation (in vitro). Functionally, histone demethylase that can demethylate both 'Lys-4' (H3K4me) and 'Lys-9' (H3K9me) of histone H3, thereby acting as a coactivator or a corepressor, depending on the context. Acts by oxidizing the substrate by FAD to generate the corresponding imine that is subsequently hydrolyzed. Acts as a corepressor by mediating demethylation of H3K4me, a specific tag for epigenetic transcriptional activation. Demethylates both mono- (H3K4me1) and di-methylated (H3K4me2) H3K4me. May play a role in the repression of neuronal genes. Alone, it is unable to demethylate H3K4me on nucleosomes and requires the presence of RCOR1/CoREST to achieve such activity. Also acts as a coactivator of androgen receptor (ANDR)-dependent transcription, by being recruited to ANDR target genes and mediating demethylation of H3K9me, a specific tag for epigenetic transcriptional repression. The presence of PRKCB in ANDR-containing complexes, which mediates phosphorylation of 'Thr-6' of histone H3 (H3T6ph), a specific tag that prevents demethylation H3K4me, prevents H3K4me demethylase activity of KDM1A. Demethylates di-methylated 'Lys-370' of p53/TP53 which prevents interaction of p53/TP53 with TP53BP1 and represses p53/TP53-mediated transcriptional activation. Demethylates and stabilizes the DNA methylase DNMT1. Demethylates methylated 'Lys-44' and methylated 'Lys-119' of SOX2. Required for gastrulation during embryogenesis. Component of a RCOR/GFI/KDM1A/HDAC complex that suppresses, via histone deacetylase (HDAC) recruitment, a number of genes implicated in multilineage blood cell development. Facilitates epithelial-to-mesenchymal transition by acting as an effector of SNAI1-mediated transcription repression of epithelial markers E-cadherin/CDH1, CDN7 and KRT8. Required for the maintenance of the silenced state of the SNAI1 target genes E-cadherin/CDH1 and CDN7. Required for the repression of GIPR expression. This is Lysine-specific histone demethylase 1A from Mus musculus (Mouse).